Reading from the N-terminus, the 220-residue chain is MSLASYIDHTLLKATATLADIRTLCEEAREHSFYAVCINPVFIPHARAWLEGSDVKVATVCGFPLGAISSEQKALEARLSAETGADEIDMVIHIGSALAGDWDAVEADVRAVRRAVPEQVLKVIIETCYLTDEQKRLATEVAVQGGADFVKTSTGFGTGGATVDDVRLMAEVIGGRAGLKAAGGVRTPADAQAMIEAGATRLGTSGGVGLVSGGENGAGY.

Asp89 functions as the Proton donor/acceptor in the catalytic mechanism. Catalysis depends on Lys151, which acts as the Schiff-base intermediate with acetaldehyde. Lys180 serves as the catalytic Proton donor/acceptor.

The protein belongs to the DeoC/FbaB aldolase family. DeoC type 1 subfamily.

The protein resides in the cytoplasm. The catalysed reaction is 2-deoxy-D-ribose 5-phosphate = D-glyceraldehyde 3-phosphate + acetaldehyde. It functions in the pathway carbohydrate degradation; 2-deoxy-D-ribose 1-phosphate degradation; D-glyceraldehyde 3-phosphate and acetaldehyde from 2-deoxy-alpha-D-ribose 1-phosphate: step 2/2. Functionally, catalyzes a reversible aldol reaction between acetaldehyde and D-glyceraldehyde 3-phosphate to generate 2-deoxy-D-ribose 5-phosphate. The chain is Deoxyribose-phosphate aldolase from Deinococcus radiodurans (strain ATCC 13939 / DSM 20539 / JCM 16871 / CCUG 27074 / LMG 4051 / NBRC 15346 / NCIMB 9279 / VKM B-1422 / R1).